The primary structure comprises 521 residues: Lysine--tRNA ligase (521 aa).

A 'HIGH' region motif is present at residues 32–40; sequence PSGTVHIGN. Positions 280-284 match the 'KMSKS' region motif; that stretch reads KISSS.

This sequence belongs to the class-I aminoacyl-tRNA synthetase family.

It is found in the cytoplasm. The enzyme catalyses tRNA(Lys) + L-lysine + ATP = L-lysyl-tRNA(Lys) + AMP + diphosphate. This Borrelia garinii subsp. bavariensis (strain ATCC BAA-2496 / DSM 23469 / PBi) (Borreliella bavariensis) protein is Lysine--tRNA ligase.